Here is a 277-residue protein sequence, read N- to C-terminus: tRNA uridine(34) hydroxylase (277 aa).

One can recognise a Rhodanese domain in the interval 126–221 (SSPDVHVIDT…YLETMRGDDS (96 aa)). Residue C181 is the Cysteine persulfide intermediate of the active site.

It belongs to the TrhO family.

It carries out the reaction uridine(34) in tRNA + AH2 + O2 = 5-hydroxyuridine(34) in tRNA + A + H2O. Functionally, catalyzes oxygen-dependent 5-hydroxyuridine (ho5U) modification at position 34 in tRNAs. The sequence is that of tRNA uridine(34) hydroxylase from Anaplasma marginale (strain St. Maries).